Reading from the N-terminus, the 193-residue chain is Probable DNA-directed RNA polymerase subunit delta (193 aa).

The 70-residue stretch at 14–83 (LSMIEVARAI…GDNKWGLRSW (70 aa)) folds into the HTH HARE-type domain. Composition is skewed to acidic residues over residues 119-133 (EDAI…EDEN) and 143-193 (YDND…ETND). Residues 119-193 (EDAIDYNDDD…DDDYEDETND (75 aa)) are disordered.

This sequence belongs to the RpoE family. RNAP is composed of a core of 2 alpha, a beta and a beta' subunits. The core is associated with a delta subunit and one of several sigma factors.

Functionally, participates in both the initiation and recycling phases of transcription. In the presence of the delta subunit, RNAP displays an increased specificity of transcription, a decreased affinity for nucleic acids, and an increased efficiency of RNA synthesis because of enhanced recycling. In Streptococcus thermophilus (strain CNRZ 1066), this protein is Probable DNA-directed RNA polymerase subunit delta.